The sequence spans 203 residues: Urease accessory protein UreG (203 aa).

A GTP-binding site is contributed by 14–21 (GPVGSGKT).

It belongs to the SIMIBI class G3E GTPase family. UreG subfamily. As to quaternary structure, homodimer. UreD, UreF and UreG form a complex that acts as a GTP-hydrolysis-dependent molecular chaperone, activating the urease apoprotein by helping to assemble the nickel containing metallocenter of UreC. The UreE protein probably delivers the nickel.

It localises to the cytoplasm. Facilitates the functional incorporation of the urease nickel metallocenter. This process requires GTP hydrolysis, probably effectuated by UreG. This Rhizobium etli (strain ATCC 51251 / DSM 11541 / JCM 21823 / NBRC 15573 / CFN 42) protein is Urease accessory protein UreG.